Consider the following 285-residue polypeptide: 2,3,4,5-tetrahydropyridine-2,6-dicarboxylate N-succinyltransferase (285 aa).

Substrate contacts are provided by Arg111 and Asp148.

Belongs to the transferase hexapeptide repeat family. As to quaternary structure, homotrimer.

It localises to the cytoplasm. It carries out the reaction (S)-2,3,4,5-tetrahydrodipicolinate + succinyl-CoA + H2O = (S)-2-succinylamino-6-oxoheptanedioate + CoA. Its pathway is amino-acid biosynthesis; L-lysine biosynthesis via DAP pathway; LL-2,6-diaminopimelate from (S)-tetrahydrodipicolinate (succinylase route): step 1/3. The sequence is that of 2,3,4,5-tetrahydropyridine-2,6-dicarboxylate N-succinyltransferase from Sinorhizobium fredii (strain NBRC 101917 / NGR234).